The sequence spans 402 residues: MPAGTAARAWVLVLALWGAVAGGQNITARIGEPLVLSCKGAPKKPPQQLEWKLNTGRTEAWKVLSPQGGPWDSVARILPNGSLLLPATGIVDEGTFRCRATNRRGKEVKSNYRVRVYQIPGKPEIVDPASELTASVPNKVGTCVSEGSYPAGTLSWHLDGKLLIPDGKETLVKEETRRHPETGLFTLRSELTVIPTQGGTHPTFSCSFSLGLPRRRPLNTAPIQLRVREPGPPEGIQLLVEPEGGIVAPGGTVTLTCAISAQPPPQVHWIKDGAPLPLAPSPVLLLPEVGHEDEGTYSCVATHPSHGPQESPPVSIRVTETGDEGPAEGSVGESGLGTLALALGILGGLGVVALLVGAILWRKRQPRREERKAPESQEDEEERAELNQSEEAEMPENGAGGP.

The signal sequence occupies residues 1–22; sequence MPAGTAARAWVLVLALWGAVAG. The 87-residue stretch at 23–109 folds into the Ig-like V-type domain; it reads GQNITARIGE…ATNRRGKEVK (87 aa). The Extracellular segment spans residues 23-340; that stretch reads GQNITARIGE…VGESGLGTLA (318 aa). Residues Asn25 and Asn80 are each glycosylated (N-linked (GlcNAc...) asparagine). 2 cysteine pairs are disulfide-bonded: Cys38–Cys98 and Cys143–Cys206. 2 consecutive Ig-like C2-type domains span residues 123–219 and 233–315; these read PEIV…RPLN and PEGI…PPVS. The segment at 295–332 is disordered; it reads GTYSCVATHPSHGPQESPPVSIRVTETGDEGPAEGSVG. Residues 341-361 traverse the membrane as a helical segment; it reads LALGILGGLGVVALLVGAILW. Over 362–402 the chain is Cytoplasmic; the sequence is RKRQPRREERKAPESQEDEEERAELNQSEEAEMPENGAGGP. The interval 365-402 is disordered; sequence QPRREERKAPESQEDEEERAELNQSEEAEMPENGAGGP. Residues Ser376 and Ser389 each carry the phosphoserine; by ATM modification. Residues 376-394 show a composition bias toward acidic residues; it reads SQEDEEERAELNQSEEAEM.

As to quaternary structure, constitutive homodimer; disulfide-linked. Forms homooligomers. Interacts with S100A1 and APP. Interacts with S100B, S100A12 and S100A14. Interacts with TIRAP. Interacts with HMGB1. Interacts with LGP2; this interaction plays an important role in AGER-mediated pro-inflammatory responses and cytokine release. Interacts with double-strand break repair protein MRE11 which is a core component of the MRN complex; the interaction enhances MRE11 endonuclease activity and promotes DNA repair. Interacts with the MCM2-7 complex via interaction with complex member MCM2; the interaction is increased following DNA replication stress and stabilizes the MCM2-7 complex at replication forks. In terms of processing, phosphorylated on its cytoplasmic domain by PKCzeta/PRKCZ upon ligand binding. Phosphorylated by ATM following DNA damage. Post-translationally, targeted by the ubiquitin E3 ligase subunit FBXO10 to mediate its ubiquitination and degradation. In terms of tissue distribution, isoform 1: Expressed at higher levels in the coronary arterioles in type 2 diabetic mice (at protein level). Endothelial cells. Expressed in lung, kidney, brain and heart. Most prevalent isoform with the highest level in heart. Isoform 2: Expressed in brain, lung, kidney and small intestine with the highest level in lung. Expressed in brain, lung, kidney and small intestine with the highest level in small intestine (at protein level). Detected in neurons of the cerebrum, bronchial epithelium, endothelial cells, tubular cells of kidney and epithelial cells of small intestine (at protein level). Expression is increased in the kidney of diabetic wild-type mice (at protein level), but not in the other tissues. Expressed only in kidney. Expression is increased in the kidney of diabetic mice. Isoform 3: Expressed in lung, kidney and heart. The second most prevalent isoform with the highest level in lung. Not expressed in brain. Isoform 4: Expressed at very low level in lung only. Isoform 5: Expressed at very low level in lung only. Isoform 6: Expressed at very low level in lung only. Isoform 7: Expressed at very low level in heart only. Isoform 8: Expressed at very low level in lung only. Isoform 9: Expressed at very low level in heart only. Isoform 10: Expressed in lung, brain, heart and kidney with a very high level in kidney. Isoform 11: Expressed in brain, kidney and heart. Not expressed in lung. Isoform 12: Expressed at very low level in lung and kidney. Isoform 13: Expressed at very low level in lung only.

The protein resides in the cell membrane. The protein localises to the cell projection. It is found in the phagocytic cup. It localises to the early endosome. Its subcellular location is the nucleus. The protein resides in the secreted. In terms of biological role, cell surface pattern recognition receptor that senses endogenous stress signals with a broad ligand repertoire including advanced glycation end products, S100 proteins, high-mobility group box 1 protein/HMGB1, amyloid beta/APP oligomers, nucleic acids, histones, phospholipids and glycosaminoglycans. Advanced glycosylation end products are nonenzymatically glycosylated proteins which accumulate in vascular tissue in aging and at an accelerated rate in diabetes. These ligands accumulate at inflammatory sites during the pathogenesis of various diseases including diabetes, vascular complications, neurodegenerative disorders and cancers, and RAGE transduces their binding into pro-inflammatory responses. Upon ligand binding, uses TIRAP and MYD88 as adapters to transduce the signal ultimately leading to the induction of inflammatory cytokines IL6, IL8 and TNFalpha through activation of NF-kappa-B. Interaction with S100A12 on endothelium, mononuclear phagocytes, and lymphocytes triggers cellular activation, with generation of key pro-inflammatory mediators. Interaction with S100B after myocardial infarction may play a role in myocyte apoptosis by activating ERK1/2 and p53/TP53 signaling. Contributes to the translocation of amyloid-beta peptide (ABPP) across the cell membrane from the extracellular to the intracellular space in cortical neurons. ABPP-initiated RAGE signaling, especially stimulation of p38 mitogen-activated protein kinase (MAPK), has the capacity to drive a transport system delivering ABPP as a complex with RAGE to the intraneuronal space. Participates in endothelial albumin transcytosis together with HMGB1 through the RAGE/SRC/Caveolin-1 pathway, leading to endothelial hyperpermeability. Mediates the loading of HMGB1 in extracellular vesicles (EVs) that shuttle HMGB1 to hepatocytes by transferrin-mediated endocytosis and subsequently promote hepatocyte pyroptosis by activating the NLRP3 inflammasome. Binds to DNA and promotes extracellular hypomethylated DNA (CpG DNA) uptake by cells via the endosomal route to activate inflammatory responses. Mediates phagocytosis by non-professional phagocytes (NPP) and this is enhanced by binding to ligands including RNA, DNA, HMGB1 and histones. Promotes NPP-mediated phagocytosis of Saccharomyces cerevisiae spores by binding to RNA attached to the spore wall. Also promotes NPP-mediated phagocytosis of apoptotic cells. Following DNA damage, recruited to DNA double-strand break sites where it colocalizes with the MRN repair complex via interaction with double-strand break repair protein MRE11. Enhances the endonuclease activity of MRE11, promoting the end resection of damaged DNA. Promotes DNA damage repair in trophoblasts which enhances trophoblast invasion and contributes to placental development and maintenance. Protects cells from DNA replication stress by localizing to damaged replication forks where it stabilizes the MCM2-7 complex and promotes faithful progression of the replication fork. Is able to advanced glycosylation end product (AGE)-induce nuclear factor NF-kappa-B activation. Its function is as follows. Down-regulates receptor for advanced glycosylation end products (RAGE)-ligand induced signaling through various MAPK pathways including ERK1/2, p38 and SAPK/JNK. Significantly affects tumor cell properties through decreasing cell migration, invasion, adhesion and proliferation, and increasing cellular apoptosis. Exhibits drastic inhibition on tumorigenesis in vitro. The sequence is that of Advanced glycosylation end product-specific receptor (Ager) from Mus musculus (Mouse).